Reading from the N-terminus, the 569-residue chain is MKLKTVRSAVLSSLFASQVLGKIIPAANKRDDDSNSKFVKLPFHKLYGDSLENVGSDKKPEVRLLKRADGYEEIIITNQQSFYSVDLEVGTPPQNVTVLVDTGSSDLWIMGSDNPYCSSNSMGSSRRRVIDKRDDSSSGGSLINDINPFGWLTGTGSAIGPTATGLGGGSGTATQSVPASEATMDCQQYGTFSTSGSSTFRSNNTYFSISYGDGTFASGTFGTDVLDLSDLNVTGLSFAVANETNSTMGVLGIGLPELEVTYSGSTASHSGKAYKYDNFPIVLKNSGAIKSNTYSLYLNDSDAMHGTILFGAVDHSKYTGTLYTIPIVNTLSASGFSSPIQFDVTINGIGISDSGSSNKTLTTTKIPALLDSGTTLTYLPQTVVSMIATELGAQYSSRIGYYVLDCPSDDSMEIVFDFGGFHINAPLSSFILSTGTTCLLGIIPTSDDTGTILGDSFLTNAYVVYDLENLEISMAQARYNTTSENIEIITSSVPSAVKAPGYTNTWSTSASIVTGGNIFTVNSSQTASFSGNLTTSTASATSTSSKRNVGDHIVPSLPLTLISLLFAFI.

A signal peptide spans M1 to G21. The propeptide occupies K22–R67. The Peptidase A1 domain occupies Y83–A475. The N-linked (GlcNAc...) asparagine glycan is linked to N95. Residue D101 is part of the active site. N203, N232, N242, N245, N299, and N358 each carry an N-linked (GlcNAc...) asparagine glycan. D371 is an active-site residue. N-linked (GlcNAc...) asparagine glycosylation is found at N480, N522, and N532. A lipid anchor (GPI-anchor amidated asparagine) is attached at N548. Positions V549–I569 are cleaved as a propeptide — removed in mature form.

The protein belongs to the peptidase A1 family. As to quaternary structure, consists of an alpha and a beta subunit, which are maintained together by a disulfide bond. Post-translationally, the zymogen is transported to the periplasm, where the propeptide is removed and the enzyme is further subjected to an internal, autocatalytic cleavage to generate an alpha/beta two-subunit endopeptidase. The proteolytic processing at the cell surface is regulated by the environmental pH. In terms of processing, extensively N-glycosylated.

The protein localises to the cell membrane. The enzyme catalyses Hydrolyzes various precursor proteins with Arg or Lys in P1, and commonly Arg or Lys also in P2. The P3 amino acid is usually non-polar, but otherwise additional basic amino acids are favorable in both non-prime and prime positions.. Cleaves proteins C-terminally to mono- and paired-basic residues. Involved in the shedding of a subset of GPI-anchored plasma membrane proteins from the cell surface, including itself, GAS1 and MSB2. May also play a role in the maturation of GPI-mannoproteins associated with the cell wall. Can process the alpha-mating factor precursor. Required for cell wall integrity. In Saccharomyces cerevisiae (strain ATCC 204508 / S288c) (Baker's yeast), this protein is Aspartic proteinase 3 (YPS1).